Reading from the N-terminus, the 275-residue chain is 4-hydroxy-3-methylbut-2-enyl diphosphate reductase (275 aa).

Position 12 (cysteine 12) interacts with [4Fe-4S] cluster. 2 residues coordinate (2E)-4-hydroxy-3-methylbut-2-enyl diphosphate: histidine 36 and histidine 70. Histidine 36 and histidine 70 together coordinate dimethylallyl diphosphate. The isopentenyl diphosphate site is built by histidine 36 and histidine 70. Position 92 (cysteine 92) interacts with [4Fe-4S] cluster. Residue histidine 120 coordinates (2E)-4-hydroxy-3-methylbut-2-enyl diphosphate. Residue histidine 120 coordinates dimethylallyl diphosphate. Histidine 120 serves as a coordination point for isopentenyl diphosphate. Glutamate 122 serves as the catalytic Proton donor. Threonine 158 lines the (2E)-4-hydroxy-3-methylbut-2-enyl diphosphate pocket. Cysteine 186 lines the [4Fe-4S] cluster pocket. 4 residues coordinate (2E)-4-hydroxy-3-methylbut-2-enyl diphosphate: serine 214, serine 215, asparagine 216, and serine 258. Residues serine 214, serine 215, asparagine 216, and serine 258 each contribute to the dimethylallyl diphosphate site. Isopentenyl diphosphate-binding residues include serine 214, serine 215, asparagine 216, and serine 258.

It belongs to the IspH family. [4Fe-4S] cluster serves as cofactor.

The enzyme catalyses isopentenyl diphosphate + 2 oxidized [2Fe-2S]-[ferredoxin] + H2O = (2E)-4-hydroxy-3-methylbut-2-enyl diphosphate + 2 reduced [2Fe-2S]-[ferredoxin] + 2 H(+). It catalyses the reaction dimethylallyl diphosphate + 2 oxidized [2Fe-2S]-[ferredoxin] + H2O = (2E)-4-hydroxy-3-methylbut-2-enyl diphosphate + 2 reduced [2Fe-2S]-[ferredoxin] + 2 H(+). Its pathway is isoprenoid biosynthesis; dimethylallyl diphosphate biosynthesis; dimethylallyl diphosphate from (2E)-4-hydroxy-3-methylbutenyl diphosphate: step 1/1. The protein operates within isoprenoid biosynthesis; isopentenyl diphosphate biosynthesis via DXP pathway; isopentenyl diphosphate from 1-deoxy-D-xylulose 5-phosphate: step 6/6. Functionally, catalyzes the conversion of 1-hydroxy-2-methyl-2-(E)-butenyl 4-diphosphate (HMBPP) into a mixture of isopentenyl diphosphate (IPP) and dimethylallyl diphosphate (DMAPP). Acts in the terminal step of the DOXP/MEP pathway for isoprenoid precursor biosynthesis. This Campylobacter hominis (strain ATCC BAA-381 / DSM 21671 / CCUG 45161 / LMG 19568 / NCTC 13146 / CH001A) protein is 4-hydroxy-3-methylbut-2-enyl diphosphate reductase.